The primary structure comprises 583 residues: Putative ABC transporter ATP-binding protein exp8 (583 aa).

The region spanning 25–308 is the ABC transmembrane type-1 domain; the sequence is TFLALSFLLA…VTQNFSTLQT (284 aa). 5 consecutive transmembrane segments (helical) span residues 26-46, 61-81, 135-155, 159-179, and 259-279; these read FLALSFLLATTVIKSVIPLVA, AVTVLLVYYGLYILQTVVQYV, MFSGILSSFISAVFIFLTTLY, VLDFRLTALVLLFLPLIFLLV, and LGYAVLMAYFGYRGFSIGITV. The ABC transporter domain occupies 341–574; sequence IRFEHVCFSY…GGTYHKMYSL (234 aa). 374–381 contacts ATP; that stretch reads GHTGSGKS.

The protein belongs to the ABC transporter superfamily.

The protein localises to the cell membrane. The sequence is that of Putative ABC transporter ATP-binding protein exp8 (exp8) from Streptococcus pneumoniae serotype 4 (strain ATCC BAA-334 / TIGR4).